The following is a 196-amino-acid chain: ATP-dependent Clp protease proteolytic subunit (196 aa).

The active-site Nucleophile is the S98. The active site involves H123.

It belongs to the peptidase S14 family. In terms of assembly, fourteen ClpP subunits assemble into 2 heptameric rings which stack back to back to give a disk-like structure with a central cavity, resembling the structure of eukaryotic proteasomes.

It is found in the cytoplasm. The catalysed reaction is Hydrolysis of proteins to small peptides in the presence of ATP and magnesium. alpha-casein is the usual test substrate. In the absence of ATP, only oligopeptides shorter than five residues are hydrolyzed (such as succinyl-Leu-Tyr-|-NHMec, and Leu-Tyr-Leu-|-Tyr-Trp, in which cleavage of the -Tyr-|-Leu- and -Tyr-|-Trp bonds also occurs).. Functionally, cleaves peptides in various proteins in a process that requires ATP hydrolysis. Has a chymotrypsin-like activity. Plays a major role in the degradation of misfolded proteins. The chain is ATP-dependent Clp protease proteolytic subunit from Acidobacterium capsulatum (strain ATCC 51196 / DSM 11244 / BCRC 80197 / JCM 7670 / NBRC 15755 / NCIMB 13165 / 161).